The following is a 114-amino-acid chain: MKKRNINIKSRLEIQELFKKGQFVKIEGINIFYRFTSLAISRILITFPRVFKGAVKRNRVRRVFKECFREYFTLLKDGCADFIFVVYPQKANINYHEVKTILKNMIVYVIKRKV.

Belongs to the RnpA family. In terms of assembly, consists of a catalytic RNA component (M1 or rnpB) and a protein subunit.

It carries out the reaction Endonucleolytic cleavage of RNA, removing 5'-extranucleotides from tRNA precursor.. Functionally, RNaseP catalyzes the removal of the 5'-leader sequence from pre-tRNA to produce the mature 5'-terminus. It can also cleave other RNA substrates such as 4.5S RNA. The protein component plays an auxiliary but essential role in vivo by binding to the 5'-leader sequence and broadening the substrate specificity of the ribozyme. This is Ribonuclease P protein component from Borrelia duttonii (strain Ly).